The following is a 205-amino-acid chain: Ribosomal RNA small subunit methyltransferase G (205 aa).

S-adenosyl-L-methionine contacts are provided by residues Gly71, Phe76, 120–121 (IE), and Arg134.

Belongs to the methyltransferase superfamily. RNA methyltransferase RsmG family.

It localises to the cytoplasm. It catalyses the reaction guanosine(527) in 16S rRNA + S-adenosyl-L-methionine = N(7)-methylguanosine(527) in 16S rRNA + S-adenosyl-L-homocysteine. Functionally, specifically methylates the N7 position of guanine in position 527 of 16S rRNA. This is Ribosomal RNA small subunit methyltransferase G from Paramagnetospirillum magneticum (strain ATCC 700264 / AMB-1) (Magnetospirillum magneticum).